Consider the following 436-residue polypeptide: D-amino acid dehydrogenase (436 aa).

3-17 serves as a coordination point for FAD; it reads ILILGSGVIGVTSAW.

It belongs to the DadA oxidoreductase family. It depends on FAD as a cofactor.

It catalyses the reaction a D-alpha-amino acid + A + H2O = a 2-oxocarboxylate + AH2 + NH4(+). It functions in the pathway amino-acid degradation; D-alanine degradation; NH(3) and pyruvate from D-alanine: step 1/1. Oxidative deamination of D-amino acids. The sequence is that of D-amino acid dehydrogenase from Photorhabdus laumondii subsp. laumondii (strain DSM 15139 / CIP 105565 / TT01) (Photorhabdus luminescens subsp. laumondii).